Here is a 560-residue protein sequence, read N- to C-terminus: Hypermethylated in cancer 2 protein (560 aa).

One can recognise a BTB domain in the interval 24–87 (CDVIIVVENA…IYTGKLLSSD (64 aa)). Disordered stretches follow at residues 122–163 (RSLL…KTKR) and 183–367 (HCTT…GGRN). Composition is skewed to polar residues over residues 126 to 153 (NKPT…NQMS) and 183 to 203 (HCTT…NGSC). Low complexity predominate over residues 224-242 (EEVSPSSIPQESPQSASES). Polar residues predominate over residues 243–259 (TANSASFDENPNTQNLT). Over residues 296-308 (PKSEGKKGEDMER) the composition is skewed to basic and acidic residues. Residues 348–362 (ENGQEQSEESGQSEN) show a composition bias toward low complexity. 5 consecutive C2H2-type zinc fingers follow at residues 387 to 409 (YVCI…VETH), 450 to 472 (FSCS…EKTH), 478 to 500 (FPCN…MRSH), 506 to 528 (FACE…MRVH), and 534 to 556 (YECQ…LRMH).

This sequence belongs to the krueppel C2H2-type zinc-finger protein family. Hic subfamily.

The protein localises to the nucleus. Transcriptional repressor. The chain is Hypermethylated in cancer 2 protein (hic2) from Danio rerio (Zebrafish).